The sequence spans 214 residues: Intermembrane phospholipid transport system binding protein MlaC (214 aa).

An N-terminal signal peptide occupies residues methionine 1–alanine 28.

Belongs to the MlaC/ttg2D family.

It is found in the periplasm. Involved in a phospholipid transport pathway that maintains lipid asymmetry in the outer membrane by retrograde trafficking of phospholipids from the outer membrane to the inner membrane. May transfer phospholipid across the periplasmic space and deliver it to the MlaFEDB complex at the inner membrane. This Haemophilus influenzae (strain ATCC 51907 / DSM 11121 / KW20 / Rd) protein is Intermembrane phospholipid transport system binding protein MlaC.